The chain runs to 390 residues: (S)-8-oxocitronellyl enol synthase CYC2 (390 aa).

Residues 35-37, 63-64, 81-82, 105-106, and Q143 contribute to the NADP(+) site; these read TGI, RR, DI, and TW. Active-site residues include K147 and Y179. The substrate site is built by K147 and Y179. NADP(+) is bound by residues Y179 and 213-215; that span reads SMM.

Belongs to the short-chain dehydrogenases/reductases (SDR) family. Highly divergent.

The enzyme catalyses (S)-8-oxocitronellyl enol + NADP(+) = (6E)-8-oxogeranial + NADPH + H(+). The catalysed reaction is (S)-8-oxocitronellyl enol + NAD(+) = (6E)-8-oxogeranial + NADH + H(+). In terms of biological role, iridoid synthase that catalyzes the first step in generation of the iridoid ring scaffold using the linear monoterpene (6E)-8-oxogeranial as substrate. Iridoids comprise a large family of distinctive bicyclic monoterpenes that possess a wide range of pharmacological activities, including anticancer, anti-inflammatory, antifungal and antibacterial activities. The chain is (S)-8-oxocitronellyl enol synthase CYC2 from Camptotheca acuminata (Happy tree).